The sequence spans 406 residues: F-box/WD repeat-containing protein mec-15 (406 aa).

The F-box domain occupies 6–53 (PTELISLPSELLCHLFTYLPQRQLITEIPLVCRRFNTILNDDKFWSRR). 5 WD repeats span residues 101-142 (GHSA…NGED), 156-195 (AHSG…ALQN), 242-279 (LHKR…KPVL), 281-320 (EYSP…VLQT), and 365-406 (SHEL…DQEN).

May interact with the SCF ubiquitin ligase complex component skr-1. In terms of tissue distribution, expressed in several neurons in the head, tail and ventral cord, but absent in touch receptor neurons in adults. Expressed in GABAergic and cholinergic motor neurons.

Its subcellular location is the perikaryon. Functionally, plays a role in mechanosensory transduction (touch sensitivity), touch receptor neuron development and synapse formation. Regulates expression of the protein snb-1 and the distribution of synaptic vesicles at synapses to promote synaptic transmission at the neuromuscular junctions of GABAergic motor neurons. This Caenorhabditis elegans protein is F-box/WD repeat-containing protein mec-15.